We begin with the raw amino-acid sequence, 417 residues long: Inhibitor of growth protein 3 (417 aa).

Disordered stretches follow at residues 126 to 165, 177 to 198, and 284 to 320; these read LDTP…SEKK, SDAS…STNN, and QTLT…SSSL. Over residues 136–152 the composition is skewed to basic residues; it reads HHVHSHSLGEKRKHNPS. The segment covering 156-165 has biased composition (basic and acidic residues); the sequence is STTDHVSEKK. Polar residues predominate over residues 177–187; the sequence is SDASKENTAGC. 3 stretches are compositionally biased toward low complexity: residues 189–198, 284–294, and 303–320; these read NNLSSSSTNN, QTLTSSATTDS, and NNKS…SSSL. The PHD-type zinc finger occupies 359 to 408; it reads PRYCICNQVSYGEMVGCDNQDCPIEWFHYGCVGLSEAPKGKWYCPQCTAA. Residues Cys362, Cys364, Cys375, Cys380, His386, Cys389, Cys402, and Cys405 each contribute to the Zn(2+) site.

It belongs to the ING family. Interacts with H3K4me3 and to a lesser extent with H3K4me2. Component of the NuA4 histone acetyltransferase complex.

Its subcellular location is the nucleus. Its function is as follows. Component of the NuA4 histone acetyltransferase (HAT) complex which is involved in transcriptional activation of select genes principally by acetylation of nucleosomal histone H4 and H2A. This modification may both alter nucleosome - DNA interactions and promote interaction of the modified histones with other proteins which positively regulate transcription. NuA4 may also play a direct role in DNA repair when directly recruited to sites of DNA damage. The chain is Inhibitor of growth protein 3 (ing3) from Xenopus tropicalis (Western clawed frog).